The following is a 306-amino-acid chain: Protoheme IX farnesyltransferase (306 aa).

Helical transmembrane passes span 32 to 52 (VVALLVLTALVGMSLSVPGAL), 58 to 78 (IPAMLGIGLLSSAAAAINHIV), 103 to 123 (NAIVFATSIALLGFIILYALV), 126 to 146 (LTAFLTLAGLVGYSFVYTMYL), 153 to 173 (NITIGGLAGAIPPLLGWTAMT), 180 to 200 (ALLLVLIIFTWTPPHFWALAI), 227 to 247 (ILLYTVLLFVVCLLPYLVGMS), 249 to 269 (WLYLIGACSLNLIFFGYAWQL), and 278 to 298 (AMATFKFSIIHLMLLFIILLL).

Belongs to the UbiA prenyltransferase family. Protoheme IX farnesyltransferase subfamily.

The protein localises to the cell inner membrane. The enzyme catalyses heme b + (2E,6E)-farnesyl diphosphate + H2O = Fe(II)-heme o + diphosphate. It participates in porphyrin-containing compound metabolism; heme O biosynthesis; heme O from protoheme: step 1/1. Functionally, converts heme B (protoheme IX) to heme O by substitution of the vinyl group on carbon 2 of heme B porphyrin ring with a hydroxyethyl farnesyl side group. The protein is Protoheme IX farnesyltransferase of Colwellia psychrerythraea (strain 34H / ATCC BAA-681) (Vibrio psychroerythus).